Reading from the N-terminus, the 238-residue chain is 4-hydroxy-tetrahydrodipicolinate reductase (238 aa).

NAD(+) is bound at residue 12-17 (GASGRM). Arginine 40 is an NADP(+) binding site. NAD(+) is bound by residues 93 to 95 (GTT) and 117 to 120 (ASNF). The Proton donor/acceptor role is filled by histidine 149. Histidine 150 lines the (S)-2,3,4,5-tetrahydrodipicolinate pocket. Catalysis depends on lysine 153, which acts as the Proton donor. (S)-2,3,4,5-tetrahydrodipicolinate is bound at residue 159–160 (GT).

The protein belongs to the DapB family.

The protein resides in the cytoplasm. The enzyme catalyses (S)-2,3,4,5-tetrahydrodipicolinate + NAD(+) + H2O = (2S,4S)-4-hydroxy-2,3,4,5-tetrahydrodipicolinate + NADH + H(+). It catalyses the reaction (S)-2,3,4,5-tetrahydrodipicolinate + NADP(+) + H2O = (2S,4S)-4-hydroxy-2,3,4,5-tetrahydrodipicolinate + NADPH + H(+). The protein operates within amino-acid biosynthesis; L-lysine biosynthesis via DAP pathway; (S)-tetrahydrodipicolinate from L-aspartate: step 4/4. Catalyzes the conversion of 4-hydroxy-tetrahydrodipicolinate (HTPA) to tetrahydrodipicolinate. The protein is 4-hydroxy-tetrahydrodipicolinate reductase of Xanthomonas axonopodis pv. citri (strain 306).